Consider the following 643-residue polypeptide: MADPEGTDGEGTGCNGWFFVETIVEKKTGDVISDDEDETATDTGSDMVDFIDTQLSICEQAEQETAQALFHAQEVQNDAQVLHLLKRKFAGGSKENSPLGEQLSVDTDLSPRLQEISLNSGHKKAKRRLFTISDSGYGCSEVEAAETQVTVNTNAENGGSVHSTQSSGGDSSDNAENVDPHCSITELKELLQASNKKAAMLAVFKDIYGLSFTDLVRNFKSDKTTCTDWVMAIFGVNPTVAEGFKTLIKPATLYAHIQCLDCKWGVLILALLRYKCGKNRLTVAKGLSTLLHVPETCMLIEPPKLRSSVAALYWYRTGISNISEVSGDTPEWIQRLTIIQHGIDDSNFDLSDMVQWAFDNDLTDESDMAFQYAQLADCNSNAAAFLKSNCQAKYLKDCAVMCRHYKRAQKRQMNMSQWIKYRCSKIDEGGDWRPIVQFLRYQGVEFISFLRALKEFLKGTPKKNCILLYGPANTGKSYFGMSFIHFLQGAIISFVNSNSHFWLEPLADTKVAMLDDATHTCWTYFDNYMRNALDGNPISIDRKHKPLLQLKCPPILLTSNIDPAKDNKWPYLESRVTVFTFPHAFPFDKNGNPVYEINDKNWKCFFERTWSRLDLHEDDEDADTEGIPFGTFKCVTGQNTRPL.

A Nuclear localization signal motif is present at residues 86–88 (KRK). Residues 109–118 (LSPRLQEISL) carry the Nuclear export signal motif. Ser110 carries the phosphoserine; by host modification. The span at 152 to 175 (NTNAENGGSVHSTQSSGGDSSDNA) shows a compositional bias: polar residues. The segment at 152 to 178 (NTNAENGGSVHSTQSSGGDSSDNAENV) is disordered. The interval 179-345 (DPHCSITELK…LTIIQHGIDD (167 aa)) is DNA-binding region. In terms of domain architecture, SF3 helicase spans 444-594 (VEFISFLRAL…FPFDKNGNPV (151 aa)). 470–477 (GPANTGKS) lines the ATP pocket. Lys551 is covalently cross-linked (Glycyl lysine isopeptide (Lys-Gly) (interchain with G-Cter in SUMO)).

It belongs to the papillomaviridae E1 protein family. In terms of assembly, can form hexamers. Interacts with E2 protein; this interaction increases E1 DNA binding specificity. Interacts with host DNA polymerase subunit POLA2. Interacts with host single stranded DNA-binding protein RPA1. Interacts with host TOP1; this interaction stimulates the enzymatic activity of TOP1. Phosphorylated. Post-translationally, sumoylated.

The protein localises to the host nucleus. It carries out the reaction Couples ATP hydrolysis with the unwinding of duplex DNA by translocating in the 3'-5' direction.. The catalysed reaction is ATP + H2O = ADP + phosphate + H(+). ATP-dependent DNA 3'-5' helicase required for initiation of viral DNA replication. It forms a complex with the viral E2 protein. The E1-E2 complex binds to the replication origin which contains binding sites for both proteins. During the initial step, a dimer of E1 interacts with a dimer of protein E2 leading to a complex that binds the viral origin of replication with high specificity. Then, a second dimer of E1 displaces the E2 dimer in an ATP-dependent manner to form the E1 tetramer. Following this, two E1 monomers are added to each half of the site, which results in the formation of two E1 trimers on the viral ori. Subsequently, two hexamers will be created. The double hexamer acts as a bi-directional helicase machinery and unwinds the viral DNA and then recruits the host DNA polymerase to start replication. The sequence is that of Replication protein E1 from Human papillomavirus 45.